A 110-amino-acid polypeptide reads, in one-letter code: uncharacterized protein (110 aa).

The span at 1–16 (MSVKLKYDKIDQRNGD) shows a compositional bias: basic and acidic residues. 2 disordered regions span residues 1-29 (MSVK…GNGN) and 73-100 (IKQQ…ESPN). Residues 20-29 (GNHNNCGNGN) are compositionally biased toward low complexity.

This is an uncharacterized protein from Dictyostelium discoideum (Social amoeba).